We begin with the raw amino-acid sequence, 780 residues long: Pentatricopeptide repeat-containing protein At1g79540 (780 aa).

PPR repeat units lie at residues S91–V125, D126–P160, D161–P196, N197–P231, N232–P266, D267–L301, G302–P336, D337–P371, D372–P406, D407–P441, S442–S476, L481–P515, D516–P550, D551–P585, T653–V687, T688–L722, and M723–V758.

The protein belongs to the PPR family. P subfamily.

This is Pentatricopeptide repeat-containing protein At1g79540 from Arabidopsis thaliana (Mouse-ear cress).